The chain runs to 156 residues: Aspartate carbamoyltransferase regulatory chain (156 aa).

The Zn(2+) site is built by C109, C114, C140, and C143.

Belongs to the PyrI family. In terms of assembly, contains catalytic and regulatory chains. The cofactor is Zn(2+).

In terms of biological role, involved in allosteric regulation of aspartate carbamoyltransferase. This is Aspartate carbamoyltransferase regulatory chain from Methanosarcina acetivorans (strain ATCC 35395 / DSM 2834 / JCM 12185 / C2A).